The sequence spans 295 residues: Alpha-1A adrenergic receptor (295 aa).

The Extracellular segment spans residues 1–27 (MVFLSGNASDSSNCTHPPAPVNISKAI). Asparagine 7, asparagine 13, and asparagine 22 each carry an N-linked (GlcNAc...) asparagine glycan. The chain crosses the membrane as a helical span at residues 28-51 (LLGVILGGLIIFGVLGNILVILSV). At 52–64 (ACHRHLHSVTHYY) the chain is on the cytoplasmic side. A helical membrane pass occupies residues 65-88 (IVNLAVADLLLTSTVLPFSAIFEI). The Extracellular segment spans residues 89–99 (LGYWAFGRVFC). Cysteine 99 and cysteine 176 are joined by a disulfide. A helical membrane pass occupies residues 100-122 (NIWAAVDVLCCTASIMGLCIISI). At 123–143 (DRYIGVSYPLRYPTIVTQKRG) the chain is on the cytoplasmic side. Residues 144-167 (LMALLCVWALSLVISIGPLFGWRQ) form a helical membrane-spanning segment. At 168 to 181 (PAPEDETICQITEE) the chain is on the extracellular side. The chain crosses the membrane as a helical span at residues 182–205 (PGYVLFSALGSFYVPLTIILVMYC). The Cytoplasmic portion of the chain corresponds to 206–273 (RVYVVAKRES…FSREKKAAKT (68 aa)). Serine 215 is subject to Phosphoserine; by PKA. Residues 274 to 295 (LGIVVGCFVLCWLPFFLVMPIG) traverse the membrane as a helical segment.

It belongs to the G-protein coupled receptor 1 family. Adrenergic receptor subfamily. ADRA1A sub-subfamily. In terms of assembly, homo- and heterooligomer. Heterooligomerizes with ADRA1B homooligomers in cardiac myocytes. Interacts with CAVIN4.

The protein localises to the nucleus membrane. It is found in the cell membrane. The protein resides in the cytoplasm. Its subcellular location is the membrane. It localises to the caveola. Functionally, this alpha-adrenergic receptor mediates its action by association with G proteins that activate a phosphatidylinositol-calcium second messenger system. Its effect is mediated by G(q) and G(11) proteins. Nuclear ADRA1A-ADRA1B heterooligomers regulate phenylephrine (PE)-stimulated ERK signaling in cardiac myocytes. This Canis lupus familiaris (Dog) protein is Alpha-1A adrenergic receptor (ADRA1A).